Consider the following 448-residue polypeptide: Oxysterol-binding protein homolog 6 (448 aa).

The tract at residues 1–42 is disordered; the sequence is MGSKKLTVGSDSHRLSKSSFSSNKSSHSATKDQPIDTDDIDE. Serine 16 is modified (phosphoserine). The span at 17 to 28 shows a compositional bias: low complexity; sequence KSSFSSNKSSHS. An OSBP-related domain (ORD) region spans residues 54–391; the sequence is IISQLRPGCD…PGEDLDYCIY (338 aa). Residues 64–69, 126–129, and 157–158 contribute to the a 1,2-diacyl-sn-glycero-3-phospho-(1D-myo-inositol 4-phosphate) site; these read LTRITL, KPLN, and HH. A 1,2-diacyl-sn-glycero-3-phospho-L-serine-binding positions include 64–69 and asparagine 129; that span reads LTRITL. An a 1,2-diacyl-sn-glycero-3-phospho-L-serine-binding site is contributed by serine 183. A 1,2-diacyl-sn-glycero-3-phospho-(1D-myo-inositol 4-phosphate)-binding residues include lysine 351, glutamate 355, and arginine 359.

Belongs to the OSBP family. As to quaternary structure, interacts with the AAA ATPase VPS4; regulates OSH6 membrane association. VPS4 is required for membrane dissociation of OSH6.

The protein localises to the cytoplasm. It is found in the cell membrane. It localises to the endoplasmic reticulum membrane. It carries out the reaction a 1,2-diacyl-sn-glycero-3-phospho-L-serine(in) = a 1,2-diacyl-sn-glycero-3-phospho-L-serine(out). Its function is as follows. Lipid transport protein (LTP) involved in non-vesicular transfer of lipids between membranes. Functions in phosphoinositide-coupled directional transport of various lipids by carrying the lipid molecule in a hydrophobic pocket and transferring it between membranes through the cytosol. Involved in maintenance of intracellular sterol distribution and homeostasis. Catalyzes the lipid countertransport between the endoplasmic reticulum (ER) and the plasma membrane (PM). Specifically exchanges phosphatidylserine (PS) with phosphatidylinositol 4-phosphate (PI4P), delivering phosphatidylserine to the PM in exchange for PI4P, which is delivered to the ER-localized PI4P phosphatase SAC1 for degradation. Thus, by maintaining a PI4P gradient at the ER/PM interface, SAC1 drives PS transport. Binds phosphatidylserine and PI4P in a mutually exclusive manner. Also binds phosphatidic acid (PA). The chain is Oxysterol-binding protein homolog 6 from Saccharomyces cerevisiae (strain ATCC 204508 / S288c) (Baker's yeast).